The following is a 419-amino-acid chain: L-rhamnose isomerase (419 aa).

His-262, Asp-294, and Asp-296 together coordinate Mn(2+).

It belongs to the rhamnose isomerase family. As to quaternary structure, homotetramer. Requires Mn(2+) as cofactor.

It is found in the cytoplasm. It carries out the reaction L-rhamnopyranose = L-rhamnulose. It participates in carbohydrate degradation; L-rhamnose degradation; glycerone phosphate from L-rhamnose: step 1/3. In terms of biological role, catalyzes the interconversion of L-rhamnose and L-rhamnulose. The sequence is that of L-rhamnose isomerase from Klebsiella pneumoniae subsp. pneumoniae (strain ATCC 700721 / MGH 78578).